Here is a 436-residue protein sequence, read N- to C-terminus: uncharacterized protein (436 aa).

The N-terminal stretch at 1 to 19 is a signal peptide; sequence MKKLLLASIIGLASTTSFA.

This is an uncharacterized protein from Rickettsia bellii (strain RML369-C).